We begin with the raw amino-acid sequence, 776 residues long: DNA topoisomerase 1 (776 aa).

In terms of domain architecture, Toprim spans 1 to 111 (MKLVIVESPA…VKSDDFFKRV (111 aa)). Mg(2+)-binding residues include E7 and D80. Residues 132–568 (DANLVNAQQA…FWSGFNHNIE (437 aa)) enclose the Topo IA-type catalytic domain. The interaction with DNA stretch occupies residues 166-171 (SAGRVQ). Y304 functions as the O-(5'-phospho-DNA)-tyrosine intermediate in the catalytic mechanism. Residues 600-627 (CPSCKTGELSLKLGKFGAFLACSNYPEC) form a C4-type zinc finger.

Belongs to the type IA topoisomerase family. In terms of assembly, monomer. Mg(2+) serves as cofactor.

It catalyses the reaction ATP-independent breakage of single-stranded DNA, followed by passage and rejoining.. Releases the supercoiling and torsional tension of DNA, which is introduced during the DNA replication and transcription, by transiently cleaving and rejoining one strand of the DNA duplex. Introduces a single-strand break via transesterification at a target site in duplex DNA. The scissile phosphodiester is attacked by the catalytic tyrosine of the enzyme, resulting in the formation of a DNA-(5'-phosphotyrosyl)-enzyme intermediate and the expulsion of a 3'-OH DNA strand. The free DNA strand then undergoes passage around the unbroken strand, thus removing DNA supercoils. Finally, in the religation step, the DNA 3'-OH attacks the covalent intermediate to expel the active-site tyrosine and restore the DNA phosphodiester backbone. This is DNA topoisomerase 1 from Rickettsia felis (strain ATCC VR-1525 / URRWXCal2) (Rickettsia azadi).